A 203-amino-acid polypeptide reads, in one-letter code: Fucoxanthin-chlorophyll a-c binding protein, chloroplastic (203 aa).

The N-terminal 30 residues, 1–30 (MKLAIAALLAGSAAAFAPAQSGKASTALNM), are a transit peptide targeting the chloroplast.

This sequence belongs to the fucoxanthin chlorophyll protein family. As to quaternary structure, the LHC complex of chromophytic algae is composed of fucoxanthin, chlorophyll A and C bound non-covalently by fucoxanthin chlorophyll proteins (FCPs). The ratio of pigments in this LHC is; fucoxanthin: chlorophyll C: chlorophyll A; (0.6-1): (0.1-0.3): (1).

Its subcellular location is the plastid. It localises to the chloroplast thylakoid membrane. Its function is as follows. The light-harvesting complex (LHC) functions as a light receptor, it captures and delivers excitation energy to photosystems with which it is closely associated. Energy is transferred from the carotenoid and chlorophyll C (or B) to chlorophyll A and the photosynthetic reaction centers where it is used to synthesize ATP and reducing power. The chain is Fucoxanthin-chlorophyll a-c binding protein, chloroplastic (FCPA) from Trieres chinensis (Marine centric diatom).